The following is a 353-amino-acid chain: Phospho-N-acetylmuramoyl-pentapeptide-transferase (353 aa).

10 helical membrane-spanning segments follow: residues 22 to 42 (FAFF…ITWA), 65 to 85 (TPTM…LFCI), 88 to 108 (DNIF…IGLI), 129 to 149 (LLAQ…SSEL), 161 to 181 (PLFD…ISSS), 192 to 212 (GLAT…LYLS), 228 to 248 (GLGE…GFLW), 256 to 276 (VFMG…LAII), 281 to 301 (ILLL…ILQV), and 330 to 350 (KIIV…LASI).

It belongs to the glycosyltransferase 4 family. MraY subfamily. Mg(2+) serves as cofactor.

The protein localises to the cell inner membrane. It carries out the reaction UDP-N-acetyl-alpha-D-muramoyl-L-alanyl-gamma-D-glutamyl-meso-2,6-diaminopimeloyl-D-alanyl-D-alanine + di-trans,octa-cis-undecaprenyl phosphate = di-trans,octa-cis-undecaprenyl diphospho-N-acetyl-alpha-D-muramoyl-L-alanyl-D-glutamyl-meso-2,6-diaminopimeloyl-D-alanyl-D-alanine + UMP. Its pathway is cell wall biogenesis; peptidoglycan biosynthesis. Functionally, catalyzes the initial step of the lipid cycle reactions in the biosynthesis of the cell wall peptidoglycan: transfers peptidoglycan precursor phospho-MurNAc-pentapeptide from UDP-MurNAc-pentapeptide onto the lipid carrier undecaprenyl phosphate, yielding undecaprenyl-pyrophosphoryl-MurNAc-pentapeptide, known as lipid I. The sequence is that of Phospho-N-acetylmuramoyl-pentapeptide-transferase from Campylobacter jejuni (strain RM1221).